Consider the following 513-residue polypeptide: Calcium-dependent protein kinase 2 (513 aa).

A lipid anchor (N-myristoyl glycine) is attached at G2. Residues 72–326 (YIIDEKLGQG…IEEALNHPWI (255 aa)) enclose the Protein kinase domain. Residues 78-86 (LGQGTYGCV) and K101 each bind ATP. D192 serves as the catalytic Proton acceptor. The J domain autoinhibitory motif signature appears at 345-353 (NLKNFKKEN). A j domain region spans residues 345 to 380 (NLKNFKKENELKKIALTIIAKHLCDVEINNLRNIFI). Residues 354 to 363 (ELKKIALTII) carry the J domain EF-hand interaction motif motif. EF-hand domains lie at 370-405 (VEIN…IGYQ), 406-441 (KIPP…KQTY), 442-477 (LKKE…DDIE), and 480-513 (LIDK…SKKK). Residues D383, D385, S387, T389, and E394 each contribute to the Ca(2+) site. Ca(2+)-binding residues include D455, D457, N459, K461, E466, D493, N495, D497, E499, and E504.

The protein belongs to the protein kinase superfamily. Ser/Thr protein kinase family. CDPK subfamily. As to quaternary structure, monomer. Requires Mg(2+) as cofactor. In terms of processing, myristoylated; myristoylation may target it to different subcellular compartments. Post-translationally, autophosphorylated in vitro.

The enzyme catalyses L-seryl-[protein] + ATP = O-phospho-L-seryl-[protein] + ADP + H(+). The catalysed reaction is L-threonyl-[protein] + ATP = O-phospho-L-threonyl-[protein] + ADP + H(+). With respect to regulation, activated by calcium. Upon calcium binding to the EF-hand domains, the C-terminus of the junction domain (J domain) undergoes a conformational change which results in the dissociation of the pseudo-substrate inhibitory motif from the catalytic domain. This, in turn, may facilitate the autophosphorylation of the activation loop at Thr-232, which leads to the kinase activation. Its function is as follows. Calcium-dependent protein kinase which acts as a sensor and effector of intracellular Ca(2+) levels probably in part downstream of cGMP-activated PKG kinase. During male gametogenesis in the mosquito gut, required for male exflagellation, possibly by regulating male gamete exit from the host erythrocytes. Not required for asexual blood stage proliferation. The chain is Calcium-dependent protein kinase 2 from Plasmodium falciparum (isolate K1 / Thailand).